A 197-amino-acid polypeptide reads, in one-letter code: Imidazoleglycerol-phosphate dehydratase (197 aa).

Belongs to the imidazoleglycerol-phosphate dehydratase family.

Its subcellular location is the cytoplasm. It catalyses the reaction D-erythro-1-(imidazol-4-yl)glycerol 3-phosphate = 3-(imidazol-4-yl)-2-oxopropyl phosphate + H2O. It functions in the pathway amino-acid biosynthesis; L-histidine biosynthesis; L-histidine from 5-phospho-alpha-D-ribose 1-diphosphate: step 6/9. The protein is Imidazoleglycerol-phosphate dehydratase (hisB) of Streptomyces coelicolor (strain ATCC BAA-471 / A3(2) / M145).